Consider the following 345-residue polypeptide: GTPase Obg (345 aa).

Residues 1–159 (MKFLDQAKVY…KWIWLRLKLI (159 aa)) form the Obg domain. In terms of domain architecture, OBG-type G spans 160–327 (ADAGLVGLPN…ALRALLAVID (168 aa)). GTP-binding positions include 166–173 (GLPNAGKS), 191–195 (FTTLH), 212–215 (DIPG), 279–282 (SKID), and 308–310 (SSQ). Mg(2+)-binding residues include S173 and T193.

It belongs to the TRAFAC class OBG-HflX-like GTPase superfamily. OBG GTPase family. As to quaternary structure, monomer. The cofactor is Mg(2+).

The protein localises to the cytoplasm. In terms of biological role, an essential GTPase which binds GTP, GDP and possibly (p)ppGpp with moderate affinity, with high nucleotide exchange rates and a fairly low GTP hydrolysis rate. Plays a role in control of the cell cycle, stress response, ribosome biogenesis and in those bacteria that undergo differentiation, in morphogenesis control. The polypeptide is GTPase Obg (Azorhizobium caulinodans (strain ATCC 43989 / DSM 5975 / JCM 20966 / LMG 6465 / NBRC 14845 / NCIMB 13405 / ORS 571)).